The chain runs to 410 residues: Protein trichome birefringence-like 34 (410 aa).

Residues 13-33 (TSFHTIAAVLVAGLIFTAVFL) traverse the membrane as a helical; Signal-anchor for type II membrane protein segment. The GDS motif signature appears at 133–135 (GDS). Residues 383–397 (DCIHWCLPGVPDVWN) carry the DCXHWCLPGXXDXWN motif motif.

This sequence belongs to the PC-esterase family. TBL subfamily.

It localises to the golgi apparatus membrane. In terms of biological role, may act as a bridging protein that binds pectin and other cell wall polysaccharides. Probably involved in maintaining esterification of pectins. May be involved in the specific O-acetylation of cell wall polymers. The protein is Protein trichome birefringence-like 34 (TBL34) of Arabidopsis thaliana (Mouse-ear cress).